Reading from the N-terminus, the 404-residue chain is Rhomboid-related protein 3 (404 aa).

EF-hand domains are found at residues 34-69 (APEDHWKVLFEKFDPGSTGYISTGKFRSLLESHSSK) and 70-105 (LDPHKKEVLLALADSHADGQICYQDFVNLMSNKRSN). The next 7 helical transmembrane spans lie at 164–184 (WFMITITLLEVALFLYNGVLL), 227–247 (LGLNVALQLLVGVPLEMVHGA), 250–270 (IGLVYVAGVVAGSLAVSVADM), 274–294 (VVGSSGGVYALVSAHLANIVM), 305–324 (LLRMAVALICMSMEFGRAVW), 338–358 (PSFVAHLGGVAVGITLGVVVL), and 371–391 (WWIFVTMYTIFVLFAVFWNIF). S278 (nucleophile) is an active-site residue. H343 is a catalytic residue.

The protein belongs to the peptidase S54 family.

The protein resides in the membrane. The enzyme catalyses Cleaves type-1 transmembrane domains using a catalytic dyad composed of serine and histidine that are contributed by different transmembrane domains.. Functionally, may be involved in regulated intramembrane proteolysis and the subsequent release of functional polypeptides from their membrane anchors. This is Rhomboid-related protein 3 (Rhbdl3) from Mus musculus (Mouse).